We begin with the raw amino-acid sequence, 187 residues long: MKKVLDETLESSPIIKRGEYNYFIHPIADGVPLFTSDLLRDVATRTIQRIDTNIDKIVTAEAMGIPIATAISMSTDIPYVVMRKRQYFLEGEVPVHQETGYSKGELYLNGVEKGDRVTIVDDVLSTGGTLIAVIKALEKAGAEIVDIVCVIERGDGKSKVKEITGYDVQTLVKIDVTENGVVILESN.

This sequence belongs to the purine/pyrimidine phosphoribosyltransferase family. Archaeal HPRT subfamily. Homodimer.

Its subcellular location is the cytoplasm. It catalyses the reaction IMP + diphosphate = hypoxanthine + 5-phospho-alpha-D-ribose 1-diphosphate. The enzyme catalyses GMP + diphosphate = guanine + 5-phospho-alpha-D-ribose 1-diphosphate. Its pathway is purine metabolism; IMP biosynthesis via salvage pathway; IMP from hypoxanthine: step 1/1. In terms of biological role, catalyzes a salvage reaction resulting in the formation of IMP that is energically less costly than de novo synthesis. The chain is Hypoxanthine/guanine phosphoribosyltransferase from Methanococcus voltae (strain ATCC BAA-1334 / A3).